The chain runs to 327 residues: Biotin synthase (327 aa).

The region spanning 49–282 (FNKEKIDLCS…KKVIRLCGGR (234 aa)) is the Radical SAM core domain. Residues C67, C71, and C74 each coordinate [4Fe-4S] cluster. Residues S110, C142, C201, and R277 each coordinate [2Fe-2S] cluster.

The protein belongs to the radical SAM superfamily. Biotin synthase family. As to quaternary structure, homodimer. It depends on [4Fe-4S] cluster as a cofactor. [2Fe-2S] cluster serves as cofactor.

It catalyses the reaction (4R,5S)-dethiobiotin + (sulfur carrier)-SH + 2 reduced [2Fe-2S]-[ferredoxin] + 2 S-adenosyl-L-methionine = (sulfur carrier)-H + biotin + 2 5'-deoxyadenosine + 2 L-methionine + 2 oxidized [2Fe-2S]-[ferredoxin]. It functions in the pathway cofactor biosynthesis; biotin biosynthesis; biotin from 7,8-diaminononanoate: step 2/2. Its function is as follows. Catalyzes the conversion of dethiobiotin (DTB) to biotin by the insertion of a sulfur atom into dethiobiotin via a radical-based mechanism. The protein is Biotin synthase of Methanococcus maripaludis (strain C7 / ATCC BAA-1331).